The primary structure comprises 369 residues: Iron-sulfur cluster assembly SufBD family protein AF_2365 (369 aa).

This sequence belongs to the iron-sulfur cluster assembly SufBD family.

The sequence is that of Iron-sulfur cluster assembly SufBD family protein AF_2365 from Archaeoglobus fulgidus (strain ATCC 49558 / DSM 4304 / JCM 9628 / NBRC 100126 / VC-16).